Reading from the N-terminus, the 147-residue chain is Glucosamine 6-phosphate N-acetyltransferase (147 aa).

Residues 7-147 (LELRVLEESD…AHERQMRLDL (141 aa)) enclose the N-acetyltransferase domain. D-glucosamine 6-phosphate-binding positions include T28 and 86–88 (EDV). Residues 88-90 (VVV) and 96-101 (GAGLGK) contribute to the acetyl-CoA site. D-glucosamine 6-phosphate-binding positions include 117–118 (YK) and D122. 131–133 (YEK) serves as a coordination point for acetyl-CoA.

This sequence belongs to the acetyltransferase family. GNA1 subfamily. In terms of assembly, homodimer. Contains poly-N-acetyllactosamines.

It localises to the glycosome. The enzyme catalyses D-glucosamine 6-phosphate + acetyl-CoA = N-acetyl-D-glucosamine 6-phosphate + CoA + H(+). It participates in nucleotide-sugar biosynthesis; UDP-N-acetyl-alpha-D-glucosamine biosynthesis; N-acetyl-alpha-D-glucosamine 1-phosphate from alpha-D-glucosamine 6-phosphate (route I): step 1/2. Functionally, involved in the biosynthesis of UDP-N-acetyl-alpha-D-glucosamine. Catalyzes the formation of N-acetyl-D-glucosamine 6-phosphate from acetyl-coenzyme A (acetyl-CoA) and D-glucosamine 6-phosphate. This is Glucosamine 6-phosphate N-acetyltransferase from Trypanosoma brucei brucei.